Here is a 482-residue protein sequence, read N- to C-terminus: 3-isopropylmalate dehydratase large subunit (482 aa).

[4Fe-4S] cluster-binding residues include cysteine 353, cysteine 414, and cysteine 417.

The protein belongs to the aconitase/IPM isomerase family. LeuC type 1 subfamily. As to quaternary structure, heterodimer of LeuC and LeuD. The cofactor is [4Fe-4S] cluster.

The enzyme catalyses (2R,3S)-3-isopropylmalate = (2S)-2-isopropylmalate. The protein operates within amino-acid biosynthesis; L-leucine biosynthesis; L-leucine from 3-methyl-2-oxobutanoate: step 2/4. In terms of biological role, catalyzes the isomerization between 2-isopropylmalate and 3-isopropylmalate, via the formation of 2-isopropylmaleate. The chain is 3-isopropylmalate dehydratase large subunit from Xanthomonas oryzae pv. oryzae (strain MAFF 311018).